Consider the following 135-residue polypeptide: Small ribosomal subunit protein uS9 (135 aa).

The interval 96 to 135 (SADNRKPLKTEGHLSRDPRAKERRKYGLKKARKAPQFSKR) is disordered. Positions 97 to 115 (ADNRKPLKTEGHLSRDPRA) are enriched in basic and acidic residues. Over residues 116–135 (KERRKYGLKKARKAPQFSKR) the composition is skewed to basic residues.

It belongs to the universal ribosomal protein uS9 family.

The polypeptide is Small ribosomal subunit protein uS9 (Prochlorococcus marinus (strain MIT 9303)).